The following is a 364-amino-acid chain: Anthranilate phosphoribosyltransferase 1 (364 aa).

5-phospho-alpha-D-ribose 1-diphosphate contacts are provided by residues Gly102, 105–106, Thr110, 112–115, 130–138, and Ser142; these read GD, NIST, and KHGNRSASS. Gly102 is an anthranilate binding site. Residue Ser114 participates in Mg(2+) binding. Residue Asn133 participates in anthranilate binding. Residue Arg188 participates in anthranilate binding. Asp247 and Glu248 together coordinate Mg(2+).

Belongs to the anthranilate phosphoribosyltransferase family. Homodimer. Requires Mg(2+) as cofactor.

It catalyses the reaction N-(5-phospho-beta-D-ribosyl)anthranilate + diphosphate = 5-phospho-alpha-D-ribose 1-diphosphate + anthranilate. The protein operates within amino-acid biosynthesis; L-tryptophan biosynthesis; L-tryptophan from chorismate: step 2/5. Catalyzes the transfer of the phosphoribosyl group of 5-phosphorylribose-1-pyrophosphate (PRPP) to anthranilate to yield N-(5'-phosphoribosyl)-anthranilate (PRA). The protein is Anthranilate phosphoribosyltransferase 1 of Nostoc sp. (strain PCC 7120 / SAG 25.82 / UTEX 2576).